The chain runs to 263 residues: MTFPNINPIIFSVGPLAVSWYSLSYVVGILFGWFYASKIIEKFPTQITKKNLEEFVTYAIIGIIVGGRLGYILLYNPYKYFSNPIEILKTYEGGMSFHGGAIGVIIAAYIFCKRHKLNFLSLTDIIAPVVPIGLFFGRIANFINGELYGRVTNSSIGVIFPDSDLNLRHPSQLYEAFFEGLVLFCILAYAVFKRNTIKKQGLNSGLFLMFYSLFRIIIEIFREPDVQIGFIFDSLTMGQILSMPLLLLGIYLIIKTECRSITK.

Transmembrane regions (helical) follow at residues 16–36 (LAVS…WFYA), 55–75 (FVTY…ILLY), 92–112 (EGGM…YIFC), and 117–137 (LNFL…LFFG). Arginine 138 provides a ligand contact to a 1,2-diacyl-sn-glycero-3-phospho-(1'-sn-glycerol). A run of 3 helical transmembrane segments spans residues 172 to 192 (QLYE…YAVF), 201 to 221 (GLNS…IEIF), and 234 to 254 (SLTM…YLII).

This sequence belongs to the Lgt family.

Its subcellular location is the cell inner membrane. It catalyses the reaction L-cysteinyl-[prolipoprotein] + a 1,2-diacyl-sn-glycero-3-phospho-(1'-sn-glycerol) = an S-1,2-diacyl-sn-glyceryl-L-cysteinyl-[prolipoprotein] + sn-glycerol 1-phosphate + H(+). It participates in protein modification; lipoprotein biosynthesis (diacylglyceryl transfer). Catalyzes the transfer of the diacylglyceryl group from phosphatidylglycerol to the sulfhydryl group of the N-terminal cysteine of a prolipoprotein, the first step in the formation of mature lipoproteins. The polypeptide is Phosphatidylglycerol--prolipoprotein diacylglyceryl transferase (Rickettsia bellii (strain OSU 85-389)).